A 65-amino-acid polypeptide reads, in one-letter code: Large ribosomal subunit protein uL29 (65 aa).

This sequence belongs to the universal ribosomal protein uL29 family.

The sequence is that of Large ribosomal subunit protein uL29 from Coxiella burnetii (strain CbuK_Q154) (Coxiella burnetii (strain Q154)).